A 61-amino-acid chain; its full sequence is Probable tautomerase BA_5626/GBAA_5626/BAS5226 (61 aa).

Proline 2 acts as the Proton acceptor; via imino nitrogen in catalysis.

Belongs to the 4-oxalocrotonate tautomerase family.

The sequence is that of Probable tautomerase BA_5626/GBAA_5626/BAS5226 from Bacillus anthracis.